The following is a 274-amino-acid chain: Glutamate--cysteine ligase regulatory subunit (274 aa).

Ser59 carries the post-translational modification Phosphoserine. Lys263 bears the N6-acetyllysine mark.

The protein belongs to the aldo/keto reductase family. Glutamate--cysteine ligase light chain subfamily. In terms of assembly, heterodimer of a catalytic heavy chain and a regulatory light chain. Most abundant in kidney. Also found in liver and testis.

It functions in the pathway sulfur metabolism; glutathione biosynthesis; glutathione from L-cysteine and L-glutamate: step 1/2. This Rattus norvegicus (Rat) protein is Glutamate--cysteine ligase regulatory subunit (Gclm).